Consider the following 251-residue polypeptide: Probable-ribose 5-phosphate isomerase (251 aa).

The protein belongs to the ribose 5-phosphate isomerase family.

The enzyme catalyses aldehydo-D-ribose 5-phosphate = D-ribulose 5-phosphate. The protein operates within carbohydrate degradation; pentose phosphate pathway; D-ribose 5-phosphate from D-ribulose 5-phosphate (non-oxidative stage): step 1/1. This chain is Probable-ribose 5-phosphate isomerase (rpia-1), found in Caenorhabditis elegans.